The primary structure comprises 387 residues: Erythronate-4-phosphate dehydrogenase (387 aa).

The substrate site is built by Ser-45 and Thr-67. Asp-147 is an NAD(+) binding site. Residue Arg-208 is part of the active site. Asp-232 lines the NAD(+) pocket. Glu-237 is a catalytic residue. His-254 acts as the Proton donor in catalysis. Position 257 (Gly-257) interacts with NAD(+). Residue Tyr-258 participates in substrate binding.

The protein belongs to the D-isomer specific 2-hydroxyacid dehydrogenase family. PdxB subfamily. As to quaternary structure, homodimer.

It is found in the cytoplasm. The catalysed reaction is 4-phospho-D-erythronate + NAD(+) = (R)-3-hydroxy-2-oxo-4-phosphooxybutanoate + NADH + H(+). The protein operates within cofactor biosynthesis; pyridoxine 5'-phosphate biosynthesis; pyridoxine 5'-phosphate from D-erythrose 4-phosphate: step 2/5. Its function is as follows. Catalyzes the oxidation of erythronate-4-phosphate to 3-hydroxy-2-oxo-4-phosphonooxybutanoate. This chain is Erythronate-4-phosphate dehydrogenase, found in Shewanella woodyi (strain ATCC 51908 / MS32).